The sequence spans 127 residues: Peroxiredoxin-2 (127 aa).

The 125-residue stretch at 1-125 (LFFYPLDFTF…ALRLVQGXQY (125 aa)) folds into the Thioredoxin domain. The active-site Cysteine sulfenic acid (-SOH) intermediate is the Cys-12. Ser-73 carries the phosphoserine modification.

It belongs to the peroxiredoxin family. AhpC/Prx1 subfamily. In terms of assembly, homodimer; disulfide-linked, upon oxidation. 5 homodimers assemble to form a ring-like decamer. Interacts with TIPIN. The enzyme can be inactivated by further oxidation of the cysteine sulfenic acid (C(P)-SOH) to sulphinic acid (C(P)-SO2H) instead of its condensation to a disulfide bond. It can be reactivated by forming a transient disulfide bond with sulfiredoxin SRXN1, which reduces the cysteine sulfinic acid in an ATP- and Mg-dependent manner. Post-translationally, acetylation increases resistance to transition to high molecular-mass complexes. Deacetylated by HDAC6 which decreases reducing activity.

It is found in the cytoplasm. It carries out the reaction a hydroperoxide + [thioredoxin]-dithiol = an alcohol + [thioredoxin]-disulfide + H2O. In terms of biological role, thiol-specific peroxidase that catalyzes the reduction of hydrogen peroxide and organic hydroperoxides to water and alcohols, respectively. Plays a role in cell protection against oxidative stress by detoxifying peroxides and as sensor of hydrogen peroxide-mediated signaling events. Might participate in the signaling cascades of growth factors and tumor necrosis factor-alpha by regulating the intracellular concentrations of H(2)O(2). In Sus scrofa (Pig), this protein is Peroxiredoxin-2 (PRDX2).